The following is a 148-amino-acid chain: MKVLLIKDVKGLGKAGEIKEVKDGYGNNFLIGKGFAKAATPDVLRQYEAAQKRKAEELKYEIANLEKLKEELAKVTVVVKKTLGANGSLFGSVSKEEIAAELEKTHHLVVEKKAIDLDTHLKAVGLYDVSIKLGHSINATLKVDVQGE.

The protein belongs to the bacterial ribosomal protein bL9 family.

Its function is as follows. Binds to the 23S rRNA. This is Large ribosomal subunit protein bL9 from Campylobacter concisus (strain 13826).